The sequence spans 338 residues: MGYNYVSLIVTILLVVITSPVVFGNDAAPIPENKGRIEQWFNTNVKQNGRGHFKTITEAINSVRAGNTRRVIIKIGPGVYKEKVTIDRSKPFITLYGHPNAMPVLTFDGTAAQYGTVDSATLIVLSDYFMAVNIILKNSAPMPDGKRKGAQALSMRISGNKAAFYNCKFYGYQDTICDDTGNHFFKDCYIEGTFDFIFGSGRSLYLGTQLNVVGDGIRVITAHAGKSAAEKSGYSFVHCKVTGTGTGIYLGRSWMSHPKVVYAYTDMSSVVNPSGWQENREAGRDKTVFYGEYKCTGTGSHKEKRVKYTQDIDDIEAKYFISLGYIQGSSWLLPPPSF.

An N-terminal signal peptide occupies residues 1 to 24 (MGYNYVSLIVTILLVVITSPVVFG). The substrate site is built by Thr116 and Gln151. Catalysis depends on Asp174, which acts as the Proton donor. Asp195 functions as the Nucleophile in the catalytic mechanism. Position 252 (Arg252) interacts with substrate.

The protein belongs to the pectinesterase family.

It is found in the secreted. The protein resides in the cell wall. The catalysed reaction is [(1-&gt;4)-alpha-D-galacturonosyl methyl ester](n) + n H2O = [(1-&gt;4)-alpha-D-galacturonosyl](n) + n methanol + n H(+). Its pathway is glycan metabolism; pectin degradation; 2-dehydro-3-deoxy-D-gluconate from pectin: step 1/5. Functionally, acts in the modification of cell walls via demethylesterification of cell wall pectin. In Arabidopsis thaliana (Mouse-ear cress), this protein is Putative pectinesterase 63 (PME63).